We begin with the raw amino-acid sequence, 246 residues long: Octanoyltransferase (246 aa).

One can recognise a BPL/LPL catalytic domain in the interval 50–231 (PDTDDEIWVV…RLIAHLDGAT (182 aa)). Substrate contacts are provided by residues 90–97 (RGGQITYH), 162–164 (ALG), and 175–177 (GLS). The active-site Acyl-thioester intermediate is C193.

Belongs to the LipB family.

It is found in the cytoplasm. It catalyses the reaction octanoyl-[ACP] + L-lysyl-[protein] = N(6)-octanoyl-L-lysyl-[protein] + holo-[ACP] + H(+). The protein operates within protein modification; protein lipoylation via endogenous pathway; protein N(6)-(lipoyl)lysine from octanoyl-[acyl-carrier-protein]: step 1/2. Catalyzes the transfer of endogenously produced octanoic acid from octanoyl-acyl-carrier-protein onto the lipoyl domains of lipoate-dependent enzymes. Lipoyl-ACP can also act as a substrate although octanoyl-ACP is likely to be the physiological substrate. The protein is Octanoyltransferase of Burkholderia pseudomallei (strain 1106a).